The following is a 466-amino-acid chain: tRNA(Ile)-lysidine synthase (466 aa).

Residue 26 to 31 participates in ATP binding; it reads SGGSDS.

This sequence belongs to the tRNA(Ile)-lysidine synthase family.

The protein resides in the cytoplasm. It carries out the reaction cytidine(34) in tRNA(Ile2) + L-lysine + ATP = lysidine(34) in tRNA(Ile2) + AMP + diphosphate + H(+). Its function is as follows. Ligates lysine onto the cytidine present at position 34 of the AUA codon-specific tRNA(Ile) that contains the anticodon CAU, in an ATP-dependent manner. Cytidine is converted to lysidine, thus changing the amino acid specificity of the tRNA from methionine to isoleucine. This is tRNA(Ile)-lysidine synthase from Oceanobacillus iheyensis (strain DSM 14371 / CIP 107618 / JCM 11309 / KCTC 3954 / HTE831).